Reading from the N-terminus, the 316-residue chain is Ribosomal RNA small subunit methyltransferase H (316 aa).

Residues 36-38, Asp-56, Phe-83, Asp-104, and Gln-111 contribute to the S-adenosyl-L-methionine site; that span reads GGH.

This sequence belongs to the methyltransferase superfamily. RsmH family.

It localises to the cytoplasm. It carries out the reaction cytidine(1402) in 16S rRNA + S-adenosyl-L-methionine = N(4)-methylcytidine(1402) in 16S rRNA + S-adenosyl-L-homocysteine + H(+). Specifically methylates the N4 position of cytidine in position 1402 (C1402) of 16S rRNA. The sequence is that of Ribosomal RNA small subunit methyltransferase H from Protochlamydia amoebophila (strain UWE25).